Consider the following 513-residue polypeptide: ATP synthase subunit alpha (513 aa).

ATP is bound at residue 169 to 176; it reads GDRQVGKT.

This sequence belongs to the ATPase alpha/beta chains family. As to quaternary structure, F-type ATPases have 2 components, CF(1) - the catalytic core - and CF(0) - the membrane proton channel. CF(1) has five subunits: alpha(3), beta(3), gamma(1), delta(1), epsilon(1). CF(0) has three main subunits: a(1), b(2) and c(9-12). The alpha and beta chains form an alternating ring which encloses part of the gamma chain. CF(1) is attached to CF(0) by a central stalk formed by the gamma and epsilon chains, while a peripheral stalk is formed by the delta and b chains.

Its subcellular location is the cell inner membrane. The enzyme catalyses ATP + H2O + 4 H(+)(in) = ADP + phosphate + 5 H(+)(out). In terms of biological role, produces ATP from ADP in the presence of a proton gradient across the membrane. The alpha chain is a regulatory subunit. The protein is ATP synthase subunit alpha of Aeromonas salmonicida (strain A449).